Consider the following 236-residue polypeptide: Small ribosomal subunit protein uS2c (236 aa).

The protein belongs to the universal ribosomal protein uS2 family.

It is found in the plastid. The protein resides in the chloroplast. In Gossypium barbadense (Sea Island cotton), this protein is Small ribosomal subunit protein uS2c (rps2).